The primary structure comprises 203 residues: ADP-ribosylation factor-like protein 6-interacting protein 1 (203 aa).

Residues 1-41 (MAEGDNRSSNLLAAETASLEEQLQGWGEVMLMADKVLRWER) lie on the Cytoplasmic side of the membrane. Residues 42 to 62 (AWFPPAIMGVVSLVFLIIYYL) form a helical membrane-spanning segment. The Lumenal portion of the chain corresponds to 63 to 65 (DPS). A helical transmembrane segment spans residues 66 to 86 (VLSGVSCFVMFLCLADYLVPI). Topologically, residues 87-133 (LAPRIFGSNKWTTEQQQRFHEICSNLVKTRRRAVGWWKRLFTLKEEK) are cytoplasmic. Residues 134 to 175 (PKMYFMTMIVSLAAVAWVGQQVHNLLLTYLIVTSLLLLPGLN) traverse the membrane as a helical segment. Residues 176-203 (QHGIISKYIGMAKREINKLLKQKEKKNE) lie on the Lumenal side of the membrane.

Belongs to the ARL6ip family. As to quaternary structure, homooligomer. Heterodimer with ARL6IP5. Interacts with ATL1, TMEM33 and ARL6.

Its subcellular location is the endomembrane system. It is found in the endoplasmic reticulum membrane. It localises to the endoplasmic reticulum. In terms of biological role, positively regulates SLC1A1/EAAC1-mediated glutamate transport by increasing its affinity for glutamate in a PKC activity-dependent manner. Promotes the catalytic efficiency of SLC1A1/EAAC1 probably by reducing its interaction with ARL6IP5, a negative regulator of SLC1A1/EAAC1-mediated glutamate transport. Plays a role in the formation and stabilization of endoplasmic reticulum tubules. Negatively regulates apoptosis, possibly by modulating the activity of caspase-9 (CASP9). Inhibits cleavage of CASP9-dependent substrates and downstream markers of apoptosis but not CASP9 itself. May be involved in protein transport, membrane trafficking, or cell signaling during hematopoietic maturation. This chain is ADP-ribosylation factor-like protein 6-interacting protein 1 (ARL6IP1), found in Pongo abelii (Sumatran orangutan).